We begin with the raw amino-acid sequence, 141 residues long: Antifungal protein ginkbilobin-like protein 1 (141 aa).

Residues 1–32 (MSISSKFQLRSSTSLLLLVALMVVMGMDGAAA) form the signal peptide. Positions 36–141 (TNFVSSACNT…CFIQYEQHSF (106 aa)) constitute a Gnk2-homologous domain. Disulfide bonds link cysteine 43–cysteine 119, cysteine 95–cysteine 104, and cysteine 107–cysteine 132. Residue asparagine 44 coordinates alpha-D-mannopyranose. Residues arginine 126 and glutamate 137 each contribute to the alpha-D-mannopyranose site.

In terms of biological role, exerts antifungal activity through its carbohydrate-binding specificity. The polypeptide is Antifungal protein ginkbilobin-like protein 1 (Picea glauca (White spruce)).